The following is a 429-amino-acid chain: Adenylosuccinate synthetase (429 aa).

GTP is bound by residues 12–18 (GDEGKGK) and 40–42 (GHT). Asp13 acts as the Proton acceptor in catalysis. The Mg(2+) site is built by Asp13 and Gly40. IMP-binding positions include 13–16 (DEGK), 38–41 (NAGH), Thr129, Arg143, Gln223, Thr238, and Arg302. His41 functions as the Proton donor in the catalytic mechanism. 298 to 304 (VVTGRKR) lines the substrate pocket. Residues Arg304, 330–332 (KLD), and 412–414 (STS) contribute to the GTP site.

The protein belongs to the adenylosuccinate synthetase family. As to quaternary structure, homodimer. Mg(2+) serves as cofactor.

Its subcellular location is the cytoplasm. It catalyses the reaction IMP + L-aspartate + GTP = N(6)-(1,2-dicarboxyethyl)-AMP + GDP + phosphate + 2 H(+). The protein operates within purine metabolism; AMP biosynthesis via de novo pathway; AMP from IMP: step 1/2. In terms of biological role, plays an important role in the de novo pathway of purine nucleotide biosynthesis. Catalyzes the first committed step in the biosynthesis of AMP from IMP. The polypeptide is Adenylosuccinate synthetase (Brucella anthropi (strain ATCC 49188 / DSM 6882 / CCUG 24695 / JCM 21032 / LMG 3331 / NBRC 15819 / NCTC 12168 / Alc 37) (Ochrobactrum anthropi)).